A 196-amino-acid chain; its full sequence is GTP cyclohydrolase-2 (196 aa).

49-53 (RVHSE) serves as a coordination point for GTP. Zn(2+) is bound by residues cysteine 54, cysteine 65, and cysteine 67. GTP-binding positions include glutamine 70, 92 to 94 (EGR), and threonine 114. Aspartate 126 serves as the catalytic Proton acceptor. Arginine 128 acts as the Nucleophile in catalysis. GTP-binding residues include threonine 149 and lysine 154.

The protein belongs to the GTP cyclohydrolase II family. As to quaternary structure, homodimer. Zn(2+) is required as a cofactor.

It catalyses the reaction GTP + 4 H2O = 2,5-diamino-6-hydroxy-4-(5-phosphoribosylamino)-pyrimidine + formate + 2 phosphate + 3 H(+). It functions in the pathway cofactor biosynthesis; riboflavin biosynthesis; 5-amino-6-(D-ribitylamino)uracil from GTP: step 1/4. Its function is as follows. Catalyzes the conversion of GTP to 2,5-diamino-6-ribosylamino-4(3H)-pyrimidinone 5'-phosphate (DARP), formate and pyrophosphate. The chain is GTP cyclohydrolase-2 from Salmonella choleraesuis (strain SC-B67).